Reading from the N-terminus, the 1525-residue chain is Multidrug resistance protein mrp-7 (1525 aa).

Residues 1-24 (MLSSFCGDGHPFSTGLPNVSICAQ) lie on the Extracellular side of the membrane. An N-linked (GlcNAc...) asparagine glycan is attached at N18. The chain crosses the membrane as a helical span at residues 25–45 (HTVLVWVPAAFFLLTLPFLSA). Residues 46-66 (QCHLTAQRFARLPFSAHFIIK) lie on the Cytoplasmic side of the membrane. A helical transmembrane segment spans residues 67–87 (LLLVAFLAANSLATWCYVLFS). The Extracellular portion of the chain corresponds to 88–94 (KNSYAAA). A helical membrane pass occupies residues 95–115 (YYVYPGLWVLVWTGTFLVHLI). Over 116 to 118 (RLR) the chain is Cytoplasmic. Residues 119–139 (CGLVSSGIQHVTSLIFLLCGA) form a helical membrane-spanning segment. The Extracellular portion of the chain corresponds to 140-165 (PEFYQWIRMENSNSFPNDLTTTDSAQ). A helical transmembrane segment spans residues 166-186 (FLSIAYLSWYSALILYTFSLC). Topologically, residues 187-346 (FADPRGAKTD…APFWKGMALS (160 aa)) are cytoplasmic. Positions 305–587 (LLASTLKFVS…IALLINQAVQ (283 aa)) constitute an ABC transmembrane type-1 1 domain. A helical membrane pass occupies residues 347–367 (ILMFSVSELRSLILNGYFYIM). At 368 to 434 (FRMGTKIQTS…SCPYQITFAL (67 aa)) the chain is on the extracellular side. The chain crosses the membrane as a helical span at residues 435–455 (VYLFITLGYSALPGVVIMVIF). At 456–535 (VPMNIISSMI…NILDSFNTAS (80 aa)) the chain is on the cytoplasmic side. A helical transmembrane segment spans residues 536-556 (PFLVALFSFGTFVLSNPSHLL). Residues 557–561 (TPQIA) lie on the Extracellular side of the membrane. Residues 562-582 (FVSLALFNQLRSPMTMIALLI) traverse the membrane as a helical segment. The Cytoplasmic portion of the chain corresponds to 583–953 (NQAVQAVVSN…ATYQLYVKAA (371 aa)). The ABC transporter 1 domain maps to 622–849 (VRVENLTASW…RGLFFDFMEE (228 aa)). Position 659–666 (659–666 (GKVGSGKS)) interacts with ATP. A disordered region spans residues 900-925 (ELTTQISTMSSPEKPPTGTSPAAATE). Residues 954 to 974 (GYLLSIAFIGFFIVYMTLQIL) traverse the membrane as a helical segment. An ABC transmembrane type-1 2 domain is found at 959-1245 (IAFIGFFIVY…AVRQVSEIEA (287 aa)). The Extracellular portion of the chain corresponds to 975–1005 (RSFWLSAWSDEYDPDSPSAHPMAKGWRLGVY). Residues 1006 to 1026 (GALGFSETACFFVALLALVFV) traverse the membrane as a helical segment. Residues 1027 to 1068 (GQRASKNLHGPLIHNLMRSPMSFYDTTPLGRILNRCAKDIET) lie on the Cytoplasmic side of the membrane. Residues 1069 to 1089 (IDMMLPMNFRYLVMCVLQVAF) traverse the membrane as a helical segment. Position 1090 (T1090) is a topological domain, extracellular. Residues 1091–1111 (LIVIIISTPLFAVVILPLALI) traverse the membrane as a helical segment. Over 1112 to 1184 (YLIFLRYYVP…RYSSLVSNRW (73 aa)) the chain is Cytoplasmic. Residues 1185 to 1205 (LAVRLEFVGNCIIFFAALFAV) traverse the membrane as a helical segment. Residues 1206–1525 (LSKEFGWITS…ADAAEQDKHE (320 aa)) lie on the Extracellular side of the membrane. Residue N1228 is glycosylated (N-linked (GlcNAc...) asparagine). Residues 1282–1516 (VKFDGYSTRY…KNSAFAKMVA (235 aa)) form the ABC transporter 2 domain. 1316–1323 (GRTGAGKS) lines the ATP pocket. N1358 and N1418 each carry an N-linked (GlcNAc...) asparagine glycan.

This sequence belongs to the ABC transporter superfamily. ABCC family. Conjugate transporter (TC 3.A.1.208) subfamily. In terms of tissue distribution, expressed in head neurons, including the dopamine (DA) motor neuron, and other cells in the body.

It is found in the cell membrane. Its function is as follows. Negatively regulates cellular toxicity by mediating the export of environmental toxicants such as methylmercury out of the cell. Plays a role in inhibiting methylmercury-induced dopamine (DA) motor neuron degeneration. Not involved in Mn(2+)- or Al(3+)-associated toxicity. The chain is Multidrug resistance protein mrp-7 from Caenorhabditis elegans.